A 261-amino-acid polypeptide reads, in one-letter code: ATP synthase subunit a (261 aa).

Helical transmembrane passes span 31 to 51 (IAFT…LIFM), 64 to 84 (WQAA…TNIG), 97 to 117 (LFMF…VVGV), 126 to 146 (LTVT…VGFW), 166 to 188 (IPMI…GLRL), 201 to 223 (VLAG…VSIP), and 235 to 255 (ELLV…LYLN).

Belongs to the ATPase A chain family. In terms of assembly, F-type ATPases have 2 components, CF(1) - the catalytic core - and CF(0) - the membrane proton channel. CF(1) has five subunits: alpha(3), beta(3), gamma(1), delta(1), epsilon(1). CF(0) has three main subunits: a(1), b(2) and c(9-12). The alpha and beta chains form an alternating ring which encloses part of the gamma chain. CF(1) is attached to CF(0) by a central stalk formed by the gamma and epsilon chains, while a peripheral stalk is formed by the delta and b chains.

It is found in the cell inner membrane. Key component of the proton channel; it plays a direct role in the translocation of protons across the membrane. This chain is ATP synthase subunit a, found in Rhizorhabdus wittichii (strain DSM 6014 / CCUG 31198 / JCM 15750 / NBRC 105917 / EY 4224 / RW1) (Sphingomonas wittichii).